The chain runs to 505 residues: Maturase K (505 aa).

Belongs to the intron maturase 2 family. MatK subfamily.

The protein resides in the plastid. Its subcellular location is the chloroplast. In terms of biological role, usually encoded in the trnK tRNA gene intron. Probably assists in splicing its own and other chloroplast group II introns. This chain is Maturase K, found in Kunzea ericoides (White teatree).